We begin with the raw amino-acid sequence, 106 residues long: MGKTNDWLDFDQLVEDDLRDALKPPSMYKVILVNDDYTPMEFVIDVLQKFFSYDVERATQLMLAVHYQGKAICGVFTAEVAETKVEMVNQYARENEHPLLCTLEKA.

The protein belongs to the ClpS family. Binds to the N-terminal domain of the chaperone ClpA.

Functionally, involved in the modulation of the specificity of the ClpAP-mediated ATP-dependent protein degradation. The protein is ATP-dependent Clp protease adapter protein ClpS of Salmonella arizonae (strain ATCC BAA-731 / CDC346-86 / RSK2980).